Consider the following 467-residue polypeptide: Argininosuccinate lyase (467 aa).

It belongs to the lyase 1 family. Argininosuccinate lyase subfamily.

Its subcellular location is the cytoplasm. It carries out the reaction 2-(N(omega)-L-arginino)succinate = fumarate + L-arginine. It participates in amino-acid biosynthesis; L-arginine biosynthesis; L-arginine from L-ornithine and carbamoyl phosphate: step 3/3. The protein is Argininosuccinate lyase of Allorhizobium ampelinum (strain ATCC BAA-846 / DSM 112012 / S4) (Agrobacterium vitis (strain S4)).